Reading from the N-terminus, the 160-residue chain is Peptide methionine sulfoxide reductase MsrA (160 aa).

Cysteine 11 is an active-site residue.

This sequence belongs to the MsrA Met sulfoxide reductase family.

It catalyses the reaction L-methionyl-[protein] + [thioredoxin]-disulfide + H2O = L-methionyl-(S)-S-oxide-[protein] + [thioredoxin]-dithiol. The catalysed reaction is [thioredoxin]-disulfide + L-methionine + H2O = L-methionine (S)-S-oxide + [thioredoxin]-dithiol. Functionally, has an important function as a repair enzyme for proteins that have been inactivated by oxidation. Catalyzes the reversible oxidation-reduction of methionine sulfoxide in proteins to methionine. This Malacoplasma penetrans (strain HF-2) (Mycoplasma penetrans) protein is Peptide methionine sulfoxide reductase MsrA.